We begin with the raw amino-acid sequence, 504 residues long: Maturase K (504 aa).

Belongs to the intron maturase 2 family. MatK subfamily.

The protein resides in the plastid. It is found in the chloroplast. In terms of biological role, usually encoded in the trnK tRNA gene intron. Probably assists in splicing its own and other chloroplast group II introns. The protein is Maturase K of Mentzelia laevicaulis (Blazing star).